A 105-amino-acid polypeptide reads, in one-letter code: Large ribosomal subunit protein bL21 (105 aa).

This sequence belongs to the bacterial ribosomal protein bL21 family. In terms of assembly, part of the 50S ribosomal subunit. Contacts protein L20.

Functionally, this protein binds to 23S rRNA in the presence of protein L20. The sequence is that of Large ribosomal subunit protein bL21 from Parabacteroides distasonis (strain ATCC 8503 / DSM 20701 / CIP 104284 / JCM 5825 / NCTC 11152).